The following is a 274-amino-acid chain: Formamidopyrimidine-DNA glycosylase (274 aa).

Proline 2 functions as the Schiff-base intermediate with DNA in the catalytic mechanism. Catalysis depends on glutamate 3, which acts as the Proton donor. Residue lysine 59 is the Proton donor; for beta-elimination activity of the active site. Residues histidine 93, arginine 112, and arginine 155 each coordinate DNA. The FPG-type zinc-finger motif lies at 240-274; that stretch reads QVYGRTGRPCPRCGQPLERVRLGGRSTHFCPRCQV. The active-site Proton donor; for delta-elimination activity is the arginine 264.

The protein belongs to the FPG family. In terms of assembly, monomer. Zn(2+) is required as a cofactor.

It carries out the reaction Hydrolysis of DNA containing ring-opened 7-methylguanine residues, releasing 2,6-diamino-4-hydroxy-5-(N-methyl)formamidopyrimidine.. The enzyme catalyses 2'-deoxyribonucleotide-(2'-deoxyribose 5'-phosphate)-2'-deoxyribonucleotide-DNA = a 3'-end 2'-deoxyribonucleotide-(2,3-dehydro-2,3-deoxyribose 5'-phosphate)-DNA + a 5'-end 5'-phospho-2'-deoxyribonucleoside-DNA + H(+). Involved in base excision repair of DNA damaged by oxidation or by mutagenic agents. Acts as a DNA glycosylase that recognizes and removes damaged bases. Has a preference for oxidized purines, such as 7,8-dihydro-8-oxoguanine (8-oxoG). Has AP (apurinic/apyrimidinic) lyase activity and introduces nicks in the DNA strand. Cleaves the DNA backbone by beta-delta elimination to generate a single-strand break at the site of the removed base with both 3'- and 5'-phosphates. This chain is Formamidopyrimidine-DNA glycosylase, found in Moorella thermoacetica (strain ATCC 39073 / JCM 9320).